The following is a 57-amino-acid chain: COP9 signalosome complex subunit 9 (57 aa).

The protein belongs to the CSN9 family. In terms of assembly, component of the CSN complex, probably composed of cops1, cops2, cops3, cops4, cops5, cops6, cops7, cops8 and cops9.

It is found in the nucleus. The protein localises to the cytoplasm. Its subcellular location is the nucleoplasm. Functionally, component of the COP9 signalosome complex (CSN), a complex involved in various cellular and developmental processes. The CSN complex is an essential regulator of the ubiquitin (Ubl) conjugation pathway by mediating the deneddylation of the cullin subunits of SCF-type E3 ligase complexes, leading to decrease the Ubl ligase activity. May play a role in cell proliferation. This Xenopus tropicalis (Western clawed frog) protein is COP9 signalosome complex subunit 9.